Here is a 305-residue protein sequence, read N- to C-terminus: Sulfate adenylyltransferase subunit 2 (305 aa).

The protein belongs to the PAPS reductase family. CysD subfamily. As to quaternary structure, heterodimer composed of CysD, the smaller subunit, and CysN.

It carries out the reaction sulfate + ATP + H(+) = adenosine 5'-phosphosulfate + diphosphate. It functions in the pathway sulfur metabolism; hydrogen sulfide biosynthesis; sulfite from sulfate: step 1/3. Functionally, with CysN forms the ATP sulfurylase (ATPS) that catalyzes the adenylation of sulfate producing adenosine 5'-phosphosulfate (APS) and diphosphate, the first enzymatic step in sulfur assimilation pathway. APS synthesis involves the formation of a high-energy phosphoric-sulfuric acid anhydride bond driven by GTP hydrolysis by CysN coupled to ATP hydrolysis by CysD. The polypeptide is Sulfate adenylyltransferase subunit 2 (Pseudomonas savastanoi pv. phaseolicola (strain 1448A / Race 6) (Pseudomonas syringae pv. phaseolicola (strain 1448A / Race 6))).